Consider the following 131-residue polypeptide: Beta/delta-urticatoxin-Dm2a (131 aa).

A signal peptide spans Met-1–Ala-24. Residues Ser-25–Glu-69 constitute a propeptide that is removed on maturation. 6 cysteine pairs are disulfide-bonded: Cys-72-Cys-88, Cys-79-Cys-93, Cys-87-Cys-101, Cys-103-Cys-117, Cys-110-Cys-122, and Cys-116-Cys-130.

This sequence belongs to the urticatoxin-2 family. As to expression, expressed in trichomes, that are stiff epidermal hairs located on the surface of petioles and leaves.

The protein resides in the secreted. Its function is as follows. Plant defense neurotoxin that causes pain and systemic symptoms in mammals via modulation of voltage-gated sodium channels (Nav). Potent modulator of human Nav1.5/SCN5A (EC(50)=55 nM), Nav1.6/SCN8A (EC(50)=0.86 nM), and Nav1.7/SCN9A (EC(50)=208 nM), where it shifts the activation threshold to more negative potentials and delays fast inactivation. Also shifts the voltage-dependence of steady-state fast inactivation of Nav1.6/SCN8A, but not that of Nav1.5/SCN5A or Nav1.7/SCN9A. On Nav1.7/SCN9A, principally acts by binding to extracellular loops of domain IV (Nav site 3). In vivo, intraplantar injection into mice causes numerous dose-dependent, immediate, and long-lasting spontaneous pain behaviors, while no swelling is observed in the injected paw. At the highest doses tested, systemic symptoms including hypokinesia and hypersalivation are observed. This Dendrocnide moroides (Gympie stinging tree) protein is Beta/delta-urticatoxin-Dm2a.